The primary structure comprises 158 residues: Protein EOLA1 (158 aa).

The ASCH domain occupies 6–92 (LSFRQPYAGF…IAGLVDIGET (87 aa)).

This sequence belongs to the EOLA family. Interacts with MT2A. In terms of tissue distribution, expressed primarily in heart, skeletal muscle, kidney, liver and placenta. Relatively high level of expression in spleen, colon and small intestine. Almost no expression in brain, thymus, lung and peripheral blood leukocytes. Expressed in epithelial cells (at protein level).

In terms of biological role, may play a role in cell protection during the inflammatory response. In epithelial cells, negatively regulates IL6 production and apoptosis through the regulation of MT2A expression. In Homo sapiens (Human), this protein is Protein EOLA1.